The primary structure comprises 144 residues: Necrosis-inducing secreted protein 1 (144 aa).

Residues 1 to 19 (MQFRASIAAAAGLFALANA) form the signal peptide. Asn-88, Asn-126, and Asn-133 each carry an N-linked (GlcNAc...) asparagine glycan. The interval 103–132 (QYVVAAGLYSLYGASSSPTLSHYNVTVTVG) is BAK1/SERK3-binding.

Belongs to the NIS1 effector family.

It is found in the secreted. The protein localises to the host cytoplasm. Secreted effector that induces necrotic lesions in Nicotiana benthamiana. Interacts with the host receptor-like kinases (RLKs) BAK1/SERK3 and BKK1/SERK4, inhibits their kinase activity and suppresses INF1-induced pathogen-associated molecular pattern (PAMP)-triggered immunity (PTI) in N.benthamiana. Also interacts with the host receptor-like cytoplasmic kinase (RLCK) BIK1 and inhibits its kinase activity, thereby inhibiting PAMP-induced ROS generation. In PTI, phosphorylation relaying by RLKs and RLCKs is critical for the initiation of downstream signaling. The polypeptide is Necrosis-inducing secreted protein 1 (Colletotrichum higginsianum (strain IMI 349063) (Crucifer anthracnose fungus)).